Here is a 439-residue protein sequence, read N- to C-terminus: Cobyrinate a,c-diamide synthase (439 aa).

The 194-residue stretch at 238 to 431 (KIAVAYDKAF…AHVNFLGNIE (194 aa)) folds into the GATase cobBQ-type domain. Catalysis depends on Cys320, which acts as the Nucleophile.

It belongs to the CobB/CbiA family. It depends on Mg(2+) as a cofactor.

The catalysed reaction is cob(II)yrinate + 2 L-glutamine + 2 ATP + 2 H2O = cob(II)yrinate a,c diamide + 2 L-glutamate + 2 ADP + 2 phosphate + 2 H(+). Its pathway is cofactor biosynthesis; adenosylcobalamin biosynthesis; cob(II)yrinate a,c-diamide from sirohydrochlorin (anaerobic route): step 10/10. Its function is as follows. Catalyzes the ATP-dependent amidation of the two carboxylate groups at positions a and c of cobyrinate, using either L-glutamine or ammonia as the nitrogen source. The sequence is that of Cobyrinate a,c-diamide synthase from Clostridium tetani (strain Massachusetts / E88).